Consider the following 245-residue polypeptide: Histone deacetylase HDT1 (245 aa).

Met1 is modified (N-acetylmethionine). Required to repress transcription stretches follow at residues 2–5 and 101–162; these read EFWG and GYSE…EEEE. The disordered stretch occupies residues 99–245; it reads PQGYSEEEEE…HNKAKHAAAK (147 aa). A compositionally biased stretch (acidic residues) spans 103 to 113; it reads SEEEEEEEEEV. Over residues 114–124 the composition is skewed to low complexity; the sequence is PAGNAAKAVAK. Residues 137–162 are compositionally biased toward acidic residues; sequence DDEEDESDSDGMDEDDSDGEDSEEEE. Over residues 178 to 195 the composition is skewed to low complexity; that stretch reads TTPKAPVSAKKAKVAVTP. The span at 208–234 shows a compositional bias: polar residues; that stretch reads ANQSPKSASQVSCGSCKKTFNSGNALE. Phosphoserine is present on Ser211. The segment at 218–241 adopts a C2H2-type zinc-finger fold; sequence VSCGSCKKTFNSGNALESHNKAKH.

Belongs to the histone deacetylase HD2 family. Interacts with DNMT2. Interacts with DEK3. As to expression, expressed in leaves, roots, stems, young plantlets, flowers and siliques. Highest levels in ovules, embryos, shoot apical meristems and first leaves. Also expressed in somatic embryos.

It localises to the nucleus. Its subcellular location is the nucleolus. Probably mediates the deacetylation of lysine residues on the N-terminal part of the core histones (H2A, H2B, H3 and H4). Histone deacetylation gives a tag for epigenetic repression and plays an important role in transcriptional regulation, cell cycle progression and developmental events. Required for histone H3 'Lys-9' deacetylation. Involved in rRNA gene silencing in nucleolar dominance. Seems to be implicated in the regulation of genes involved in seeds development. This Arabidopsis thaliana (Mouse-ear cress) protein is Histone deacetylase HDT1.